Consider the following 1106-residue polypeptide: Carbamoyl phosphate synthase large chain (1106 aa).

The segment at 1 to 402 is carboxyphosphate synthetic domain; it reads MPKREDLKSV…ALQKALRSLE (402 aa). 12 residues coordinate ATP: Arg-129, Arg-169, Gly-175, Gly-176, Glu-208, Ile-210, Glu-215, Gly-241, Val-242, His-243, Gln-285, and Glu-299. Residues 133-328 form the ATP-grasp 1 domain; the sequence is KGVVERCGAE…IAKIATKLSL (196 aa). Mg(2+)-binding residues include Gln-285, Glu-299, and Asn-301. Mn(2+)-binding residues include Gln-285, Glu-299, and Asn-301. The tract at residues 403-546 is oligomerization domain; the sequence is QKGSQLDFGS…YHYSSYDQED (144 aa). Residues 547 to 956 are carbamoyl phosphate synthetic domain; the sequence is EIALHEKPSV…AFAKSQAAAN (410 aa). The ATP-grasp 2 domain maps to 677–868; the sequence is ARVLDIAGLI…LAKAAALIGT (192 aa). Residues Arg-713, Arg-752, Leu-754, Glu-759, Gly-784, Ile-785, His-786, Ser-787, Gln-827, and Glu-839 each contribute to the ATP site. Mg(2+) is bound by residues Gln-827, Glu-839, and Asn-841. Positions 827, 839, and 841 each coordinate Mn(2+). In terms of domain architecture, MGS-like spans 957 to 1106; the sequence is NALPTEGKVF…EALLEAAANV (150 aa). Residues 957–1106 are allosteric domain; that stretch reads NALPTEGKVF…EALLEAAANV (150 aa).

This sequence belongs to the CarB family. In terms of assembly, composed of two chains; the small (or glutamine) chain promotes the hydrolysis of glutamine to ammonia, which is used by the large (or ammonia) chain to synthesize carbamoyl phosphate. Tetramer of heterodimers (alpha,beta)4. Requires Mg(2+) as cofactor. The cofactor is Mn(2+).

It catalyses the reaction hydrogencarbonate + L-glutamine + 2 ATP + H2O = carbamoyl phosphate + L-glutamate + 2 ADP + phosphate + 2 H(+). The enzyme catalyses hydrogencarbonate + NH4(+) + 2 ATP = carbamoyl phosphate + 2 ADP + phosphate + 2 H(+). It functions in the pathway amino-acid biosynthesis; L-arginine biosynthesis; carbamoyl phosphate from bicarbonate: step 1/1. It participates in pyrimidine metabolism; UMP biosynthesis via de novo pathway; (S)-dihydroorotate from bicarbonate: step 1/3. Functionally, large subunit of the glutamine-dependent carbamoyl phosphate synthetase (CPSase). CPSase catalyzes the formation of carbamoyl phosphate from the ammonia moiety of glutamine, carbonate, and phosphate donated by ATP, constituting the first step of 2 biosynthetic pathways, one leading to arginine and/or urea and the other to pyrimidine nucleotides. The large subunit (synthetase) binds the substrates ammonia (free or transferred from glutamine from the small subunit), hydrogencarbonate and ATP and carries out an ATP-coupled ligase reaction, activating hydrogencarbonate by forming carboxy phosphate which reacts with ammonia to form carbamoyl phosphate. The protein is Carbamoyl phosphate synthase large chain of Renibacterium salmoninarum (strain ATCC 33209 / DSM 20767 / JCM 11484 / NBRC 15589 / NCIMB 2235).